The following is a 446-amino-acid chain: Rhamnogalacturonase A (446 aa).

A signal peptide spans 1–18 (MPALPILALALAPLLVNG). Cys-39 and Cys-65 form a disulfide bridge. Asn-50, Asn-115, and Asn-124 each carry an N-linked (GlcNAc...) asparagine glycan. The Proton donor role is filled by Asp-216. Cys-218 and Cys-235 are joined by a disulfide. 3 N-linked (GlcNAc...) asparagine glycosylation sites follow: Asn-236, Asn-281, and Asn-318. 2 disulfides stabilise this stretch: Cys-341–Cys-347 and Cys-369–Cys-378.

This sequence belongs to the glycosyl hydrolase 28 family.

The protein localises to the secreted. The catalysed reaction is Endohydrolysis of alpha-D-GalA-(1-&gt;2)-alpha-L-Rha glycosidic bond in the rhamnogalacturonan I backbone with initial inversion of anomeric configuration releasing oligosaccharides with beta-D-GalA at the reducing end.. In terms of biological role, pectinolytic enzymes consist of four classes of enzymes: pectine lyase, polygalacturonase, pectin methylesterase and rhamnogalacturonase. Hydrolyzes alpha-D-galacturonopyranosyl-(1,2)-alpha-L-rhamnopyranosyl linkages in the backbone of the hairy regions of pectins. The chain is Rhamnogalacturonase A (rhgA) from Aspergillus niger.